A 322-amino-acid chain; its full sequence is Lipoyl synthase (322 aa).

Residues C66, C71, C77, C92, C96, C99, and S306 each coordinate [4Fe-4S] cluster. One can recognise a Radical SAM core domain in the interval 78 to 295 (FSKGTATFMI…EKEAYELGFS (218 aa)).

This sequence belongs to the radical SAM superfamily. Lipoyl synthase family. [4Fe-4S] cluster is required as a cofactor.

The protein localises to the cytoplasm. It catalyses the reaction [[Fe-S] cluster scaffold protein carrying a second [4Fe-4S](2+) cluster] + N(6)-octanoyl-L-lysyl-[protein] + 2 oxidized [2Fe-2S]-[ferredoxin] + 2 S-adenosyl-L-methionine + 4 H(+) = [[Fe-S] cluster scaffold protein] + N(6)-[(R)-dihydrolipoyl]-L-lysyl-[protein] + 4 Fe(3+) + 2 hydrogen sulfide + 2 5'-deoxyadenosine + 2 L-methionine + 2 reduced [2Fe-2S]-[ferredoxin]. The protein operates within protein modification; protein lipoylation via endogenous pathway; protein N(6)-(lipoyl)lysine from octanoyl-[acyl-carrier-protein]: step 2/2. In terms of biological role, catalyzes the radical-mediated insertion of two sulfur atoms into the C-6 and C-8 positions of the octanoyl moiety bound to the lipoyl domains of lipoate-dependent enzymes, thereby converting the octanoylated domains into lipoylated derivatives. This is Lipoyl synthase from Neisseria meningitidis serogroup C (strain 053442).